The sequence spans 161 residues: Nucleotide-binding protein Swoo_3646 (161 aa).

Belongs to the YajQ family.

Its function is as follows. Nucleotide-binding protein. The protein is Nucleotide-binding protein Swoo_3646 of Shewanella woodyi (strain ATCC 51908 / MS32).